Here is a 111-residue protein sequence, read N- to C-terminus: Ribosome-binding factor A (111 aa).

It belongs to the RbfA family. As to quaternary structure, monomer. Binds 30S ribosomal subunits, but not 50S ribosomal subunits or 70S ribosomes.

It is found in the cytoplasm. One of several proteins that assist in the late maturation steps of the functional core of the 30S ribosomal subunit. Associates with free 30S ribosomal subunits (but not with 30S subunits that are part of 70S ribosomes or polysomes). Required for efficient processing of 16S rRNA. May interact with the 5'-terminal helix region of 16S rRNA. This is Ribosome-binding factor A from Helicobacter pylori (strain Shi470).